Here is an 85-residue protein sequence, read N- to C-terminus: MKMTLIAILTCAAVLVLHTTAAEELEAESQLMEVGMPDTELEAVDEERLFECSVSCEIEKEGDKDCKKKKCKGGWKCKFNMCVKV.

The first 22 residues, 1–22 (MKMTLIAILTCAAVLVLHTTAA), serve as a signal peptide directing secretion. The propeptide occupies 23 to 48 (EELEAESQLMEVGMPDTELEAVDEER). 3 cysteine pairs are disulfide-bonded: Cys52–Cys66, Cys56–Cys77, and Cys71–Cys82.

The protein belongs to the neurotoxin 12 (Hwtx-2) family. 02 (Hwtx-2) subfamily. In terms of tissue distribution, expressed by the venom gland.

The protein localises to the secreted. Its function is as follows. Postsynaptic neurotoxin. This Cyriopagopus hainanus (Chinese bird spider) protein is U4-theraphotoxin-Hhn1z.